We begin with the raw amino-acid sequence, 401 residues long: Acetate kinase (401 aa).

Residue N7 coordinates Mg(2+). K14 provides a ligand contact to ATP. R90 contributes to the substrate binding site. The Proton donor/acceptor role is filled by D147. Residues H207 to G211, D282 to R284, and G330 to N334 each bind ATP. Mg(2+) is bound at residue E383.

This sequence belongs to the acetokinase family. In terms of assembly, homodimer. It depends on Mg(2+) as a cofactor. Mn(2+) serves as cofactor.

It is found in the cytoplasm. It carries out the reaction acetate + ATP = acetyl phosphate + ADP. It participates in metabolic intermediate biosynthesis; acetyl-CoA biosynthesis; acetyl-CoA from acetate: step 1/2. In terms of biological role, catalyzes the formation of acetyl phosphate from acetate and ATP. Can also catalyze the reverse reaction. The protein is Acetate kinase of Clostridium novyi (strain NT).